Reading from the N-terminus, the 458-residue chain is Phosphoglucosamine mutase (458 aa).

Ser-108 acts as the Phosphoserine intermediate in catalysis. Mg(2+) contacts are provided by Ser-108, Asp-247, Asp-249, and Asp-251. Ser-108 is subject to Phosphoserine.

The protein belongs to the phosphohexose mutase family. Mg(2+) serves as cofactor. Post-translationally, activated by phosphorylation.

It catalyses the reaction alpha-D-glucosamine 1-phosphate = D-glucosamine 6-phosphate. Functionally, catalyzes the conversion of glucosamine-6-phosphate to glucosamine-1-phosphate. This Nitrosomonas eutropha (strain DSM 101675 / C91 / Nm57) protein is Phosphoglucosamine mutase.